Consider the following 127-residue polypeptide: Small ribosomal subunit protein bS6 (127 aa).

The interval 99–127 (PSPMMKEEKSKSMMPGDAAPAAPAETAAA) is disordered. The segment covering 110-127 (SMMPGDAAPAAPAETAAA) has biased composition (low complexity).

This sequence belongs to the bacterial ribosomal protein bS6 family.

In terms of biological role, binds together with bS18 to 16S ribosomal RNA. This chain is Small ribosomal subunit protein bS6, found in Dechloromonas aromatica (strain RCB).